Consider the following 345-residue polypeptide: Anthranilate phosphoribosyltransferase (345 aa).

5-phospho-alpha-D-ribose 1-diphosphate is bound by residues Gly79, Gly82–Asp83, Thr87, Asn89–Thr92, Lys106–Gly114, and Ser118. Gly79 lines the anthranilate pocket. Ser91 lines the Mg(2+) pocket. Asn109 lines the anthranilate pocket. Arg164 serves as a coordination point for anthranilate. Mg(2+) contacts are provided by Asp223 and Glu224.

It belongs to the anthranilate phosphoribosyltransferase family. Homodimer. It depends on Mg(2+) as a cofactor.

The enzyme catalyses N-(5-phospho-beta-D-ribosyl)anthranilate + diphosphate = 5-phospho-alpha-D-ribose 1-diphosphate + anthranilate. The protein operates within amino-acid biosynthesis; L-tryptophan biosynthesis; L-tryptophan from chorismate: step 2/5. Functionally, catalyzes the transfer of the phosphoribosyl group of 5-phosphorylribose-1-pyrophosphate (PRPP) to anthranilate to yield N-(5'-phosphoribosyl)-anthranilate (PRA). The sequence is that of Anthranilate phosphoribosyltransferase from Saccharolobus islandicus (strain M.16.27) (Sulfolobus islandicus).